Here is a 180-residue protein sequence, read N- to C-terminus: Large ribosomal subunit protein uL6 (180 aa).

Belongs to the universal ribosomal protein uL6 family. As to quaternary structure, part of the 50S ribosomal subunit.

Its function is as follows. This protein binds to the 23S rRNA, and is important in its secondary structure. It is located near the subunit interface in the base of the L7/L12 stalk, and near the tRNA binding site of the peptidyltransferase center. This Clostridium botulinum (strain ATCC 19397 / Type A) protein is Large ribosomal subunit protein uL6.